Reading from the N-terminus, the 124-residue chain is Small ribosomal subunit protein uS12 (124 aa).

A 3-methylthioaspartic acid modification is found at Asp-89.

This sequence belongs to the universal ribosomal protein uS12 family. In terms of assembly, part of the 30S ribosomal subunit. Contacts proteins S8 and S17. May interact with IF1 in the 30S initiation complex.

Functionally, with S4 and S5 plays an important role in translational accuracy. In terms of biological role, interacts with and stabilizes bases of the 16S rRNA that are involved in tRNA selection in the A site and with the mRNA backbone. Located at the interface of the 30S and 50S subunits, it traverses the body of the 30S subunit contacting proteins on the other side and probably holding the rRNA structure together. The combined cluster of proteins S8, S12 and S17 appears to hold together the shoulder and platform of the 30S subunit. The chain is Small ribosomal subunit protein uS12 from Vibrio campbellii (strain ATCC BAA-1116).